A 199-amino-acid polypeptide reads, in one-letter code: KGYVFKIMGGCDKQGFPMKQGVLTPGRVRLLLYRGTPCFRGYGRRNGERRRKSVRGCIVSPDLSVLNLVIVKKGENDLPGLTDTEKPRMRGPREPQRSEALYFKEDDVRKYVNTTAEFTTKWKGSKAPKIQRLVTPLTLQRKRARIADKKKRIAKAKSEAAEYQKLLASRLKEQREKRSESLAKKRSRLSAASKPSIAA.

Basic and acidic residues predominate over residues 172–183 (KEQREKRSESLA). Residues 172 to 199 (KEQREKRSESLAKKRSRLSAASKPSIAA) form a disordered region.

The protein belongs to the eukaryotic ribosomal protein eS6 family. Ribosomal protein S6 is the major substrate of protein kinases in eukaryote ribosomes.

Its function is as follows. Component of the 40S small ribosomal subunit. Plays an important role in controlling cell growth and proliferation through the selective translation of particular classes of mRNA. The protein is Small ribosomal subunit protein eS6 (RPS6) of Nicotiana tabacum (Common tobacco).